We begin with the raw amino-acid sequence, 443 residues long: UDP-N-acetylmuramate--L-alanine ligase (443 aa).

ATP is bound at residue 110 to 116 (GAHGKTS).

It belongs to the MurCDEF family.

It is found in the cytoplasm. The enzyme catalyses UDP-N-acetyl-alpha-D-muramate + L-alanine + ATP = UDP-N-acetyl-alpha-D-muramoyl-L-alanine + ADP + phosphate + H(+). Its pathway is cell wall biogenesis; peptidoglycan biosynthesis. Functionally, cell wall formation. The sequence is that of UDP-N-acetylmuramate--L-alanine ligase from Streptococcus agalactiae serotype III (strain NEM316).